Reading from the N-terminus, the 395-residue chain is Leucine aminopeptidase 1 (395 aa).

An N-terminal signal peptide occupies residues 1-19 (MKHLSLLALAAVAPTTALA). A propeptide spanning residues 20–95 (GVIDHQQVTF…SVKSFEQTKV (76 aa)) is cleaved from the precursor. N-linked (GlcNAc...) asparagine glycosylation is present at Asn-187. Positions 195, 214, 253, and 280 each coordinate Zn(2+). An intrachain disulfide couples Cys-329 to Cys-333. Position 362 (His-362) interacts with Zn(2+).

This sequence belongs to the peptidase M28 family. M28E subfamily. In terms of assembly, monomer. It depends on Zn(2+) as a cofactor.

It is found in the secreted. Its function is as follows. Extracellular aminopeptidase that allows assimilation of proteinaceous substrates. This is Leucine aminopeptidase 1 (LAP1) from Uncinocarpus reesii (strain UAMH 1704).